A 427-amino-acid chain; its full sequence is Diaminobutyrate--2-oxoglutarate transaminase (427 aa).

N6-(pyridoxal phosphate)lysine is present on K269.

The protein belongs to the class-III pyridoxal-phosphate-dependent aminotransferase family. Pyridoxal 5'-phosphate serves as cofactor.

It catalyses the reaction L-2,4-diaminobutanoate + 2-oxoglutarate = L-aspartate 4-semialdehyde + L-glutamate. Its pathway is amine and polyamine biosynthesis; ectoine biosynthesis; L-ectoine from L-aspartate 4-semialdehyde: step 1/3. In terms of biological role, catalyzes reversively the conversion of L-aspartate beta-semialdehyde (ASA) to L-2,4-diaminobutyrate (DABA) by transamination with L-glutamate. The chain is Diaminobutyrate--2-oxoglutarate transaminase (ectB) from Marinococcus halophilus.